The following is a 303-amino-acid chain: Methionyl-tRNA formyltransferase (303 aa).

(6S)-5,6,7,8-tetrahydrofolate is bound at residue 110–113 (SLLP).

This sequence belongs to the Fmt family.

The catalysed reaction is L-methionyl-tRNA(fMet) + (6R)-10-formyltetrahydrofolate = N-formyl-L-methionyl-tRNA(fMet) + (6S)-5,6,7,8-tetrahydrofolate + H(+). Functionally, attaches a formyl group to the free amino group of methionyl-tRNA(fMet). The formyl group appears to play a dual role in the initiator identity of N-formylmethionyl-tRNA by promoting its recognition by IF2 and preventing the misappropriation of this tRNA by the elongation apparatus. The polypeptide is Methionyl-tRNA formyltransferase (Campylobacter lari (strain RM2100 / D67 / ATCC BAA-1060)).